The sequence spans 402 residues: Acetate kinase (402 aa).

Residue N13 coordinates Mg(2+). ATP is bound at residue K20. A substrate-binding site is contributed by R94. Residue D151 is the Proton donor/acceptor of the active site. Residues 211–215 (HLGNG), 285–287 (DFR), and 333–337 (GVGEN) each bind ATP. Residue E387 coordinates Mg(2+).

The protein belongs to the acetokinase family. As to quaternary structure, homodimer. The cofactor is Mg(2+). It depends on Mn(2+) as a cofactor.

The protein resides in the cytoplasm. The catalysed reaction is acetate + ATP = acetyl phosphate + ADP. It participates in metabolic intermediate biosynthesis; acetyl-CoA biosynthesis; acetyl-CoA from acetate: step 1/2. In terms of biological role, catalyzes the formation of acetyl phosphate from acetate and ATP. Can also catalyze the reverse reaction. The polypeptide is Acetate kinase (Nocardia farcinica (strain IFM 10152)).